We begin with the raw amino-acid sequence, 475 residues long: V-type ATP synthase beta chain (475 aa).

This sequence belongs to the ATPase alpha/beta chains family.

In terms of biological role, produces ATP from ADP in the presence of a proton gradient across the membrane. The V-type beta chain is a regulatory subunit. The polypeptide is V-type ATP synthase beta chain (Anaeromyxobacter dehalogenans (strain 2CP-C)).